The primary structure comprises 165 residues: UPF0254 protein MmarC7_0182 (165 aa).

Belongs to the UPF0254 family.

The protein is UPF0254 protein MmarC7_0182 of Methanococcus maripaludis (strain C7 / ATCC BAA-1331).